A 701-amino-acid polypeptide reads, in one-letter code: MARITPIARYRNIGISAHIDAGKTTTTERILFYTGVNHKIGEVHNGAATMDWMAQEQERGITITSAATTCFWAGMAKQFDSHRINIIDTPGHVDFTIEVERSMRVLDGAVMVYCAVGGVQPQSETVWRQANKYKVPRIAFVNKMDRMGANYLRVVEQLKTRLAANPVPIQLAIGAEEKFTGVVDLVKMKAINWSEADQGVTFTYEDIPADLTELADKWHQHLVESAAEASEELMDKYLGGEELTEEEIKHGLRQRVLNNEIILVTCGSAFKNKGVQAMLDAVIEYLPAPTDVAAINGVLEDGETHAERHSSDEEPFSALAFKIATDPFVGNLTFFRVYSGVVNSGDTVLNSVKDKRERFGRIVQMHANKREEIKEVRAGDIAAAIGLKDVTTGDTLCDTSAPIILERMEFPEPVISVAVEPKTKADQEKMGLALGRLAQEDPSFRVWTDEESGQTIIAGMGELHLEILVDRMRREFNVEANVGKPQVAYRETIRSIVEQEGKFVRQSGGRGQFGHVWLRIEPMEPGGKGYEFLNEIVGGVVPKEYVPAVDKGVQEQLKSGVLAGYPIVDVRVAAFDGSYHEVDSSEMAFKIAGSMAFKEGFMKAKPVLLEPIMKVEVETPEDYMGDVIGDLNRRRGMIDGMEDTTTGKTVRAQVPLSEMFGYATDLRSQTQGRASYSMEFLKYNEAPNNVAQAIIETRRAK.

The region spanning 8 to 290 (ARYRNIGISA…AVIEYLPAPT (283 aa)) is the tr-type G domain. GTP is bound by residues 17-24 (AHIDAGKT), 88-92 (DTPGH), and 142-145 (NKMD).

Belongs to the TRAFAC class translation factor GTPase superfamily. Classic translation factor GTPase family. EF-G/EF-2 subfamily.

It localises to the cytoplasm. Functionally, catalyzes the GTP-dependent ribosomal translocation step during translation elongation. During this step, the ribosome changes from the pre-translocational (PRE) to the post-translocational (POST) state as the newly formed A-site-bound peptidyl-tRNA and P-site-bound deacylated tRNA move to the P and E sites, respectively. Catalyzes the coordinated movement of the two tRNA molecules, the mRNA and conformational changes in the ribosome. This chain is Elongation factor G, found in Sodalis glossinidius (strain morsitans).